The chain runs to 431 residues: 5-methylthioadenosine/S-adenosylhomocysteine deaminase (431 aa).

Zn(2+)-binding residues include His66 and His68. The substrate site is built by Glu95, Arg147, and His185. Residue His212 participates in Zn(2+) binding. Residues Glu215 and Asp300 each contribute to the substrate site. Residue Asp300 coordinates Zn(2+).

Belongs to the metallo-dependent hydrolases superfamily. MTA/SAH deaminase family. Zn(2+) is required as a cofactor.

The enzyme catalyses S-adenosyl-L-homocysteine + H2O + H(+) = S-inosyl-L-homocysteine + NH4(+). The catalysed reaction is S-methyl-5'-thioadenosine + H2O + H(+) = S-methyl-5'-thioinosine + NH4(+). In terms of biological role, catalyzes the deamination of 5-methylthioadenosine and S-adenosyl-L-homocysteine into 5-methylthioinosine and S-inosyl-L-homocysteine, respectively. Is also able to deaminate adenosine. This is 5-methylthioadenosine/S-adenosylhomocysteine deaminase from Desulfitobacterium hafniense (strain Y51).